The chain runs to 274 residues: 2,3,4,5-tetrahydropyridine-2,6-dicarboxylate N-succinyltransferase (274 aa).

Substrate contacts are provided by Arg-104 and Asp-141.

This sequence belongs to the transferase hexapeptide repeat family. In terms of assembly, homotrimer.

It is found in the cytoplasm. The enzyme catalyses (S)-2,3,4,5-tetrahydrodipicolinate + succinyl-CoA + H2O = (S)-2-succinylamino-6-oxoheptanedioate + CoA. Its pathway is amino-acid biosynthesis; L-lysine biosynthesis via DAP pathway; LL-2,6-diaminopimelate from (S)-tetrahydrodipicolinate (succinylase route): step 1/3. The sequence is that of 2,3,4,5-tetrahydropyridine-2,6-dicarboxylate N-succinyltransferase from Yersinia enterocolitica serotype O:8 / biotype 1B (strain NCTC 13174 / 8081).